A 381-amino-acid polypeptide reads, in one-letter code: Heme A synthase (381 aa).

The next 5 helical transmembrane spans lie at 25-45 (GAVR…VAVG), 112-132 (LLGR…WWRG), 138-158 (LLLG…IGWI), 176-196 (LALH…LAAG), and 212-232 (VAGL…LVAG). A heme-binding site is contributed by H277. Helical transmembrane passes span 279–299 (LFAY…VRMA), 307–327 (AMGV…TLLL), and 329–349 (VPLW…IMAT). Residue H337 participates in heme binding.

The protein belongs to the COX15/CtaA family. Type 2 subfamily. Interacts with CtaB. Heme b serves as cofactor.

It is found in the cell membrane. It catalyses the reaction Fe(II)-heme o + 2 A + H2O = Fe(II)-heme a + 2 AH2. The protein operates within porphyrin-containing compound metabolism; heme A biosynthesis; heme A from heme O: step 1/1. In terms of biological role, catalyzes the conversion of heme O to heme A by two successive hydroxylations of the methyl group at C8. The first hydroxylation forms heme I, the second hydroxylation results in an unstable dihydroxymethyl group, which spontaneously dehydrates, resulting in the formyl group of heme A. This Methylorubrum populi (strain ATCC BAA-705 / NCIMB 13946 / BJ001) (Methylobacterium populi) protein is Heme A synthase.